The primary structure comprises 617 residues: Probable Xaa-Pro aminopeptidase P (617 aa).

Residues Asp414, Asp425, Glu523, and Glu537 each coordinate Mn(2+).

The protein belongs to the peptidase M24B family. Requires Mn(2+) as cofactor.

The catalysed reaction is Release of any N-terminal amino acid, including proline, that is linked to proline, even from a dipeptide or tripeptide.. In terms of biological role, catalyzes the removal of a penultimate prolyl residue from the N-termini of peptides. The polypeptide is Probable Xaa-Pro aminopeptidase P (AMPP) (Ajellomyces capsulatus (strain NAm1 / WU24) (Darling's disease fungus)).